Consider the following 509-residue polypeptide: Transmembrane protein 180 (509 aa).

At 1-10 the chain is on the extracellular side; that stretch reads MGLRLLACLF. The helical transmembrane segment at 11 to 42 threads the bilayer; it reads HLPTAVIYGSLSLFVSILHNVFLLYYVDTFVS. Over 43–54 the chain is Cytoplasmic; sequence VYKIDKLSFWIG. The chain crosses the membrane as a helical span at residues 55–73; the sequence is ETVFLIWNSLNDPLFGWLS. Residues 74–98 lie on the Extracellular side of the membrane; it reads DRVFLSTQQPGAEISSPEVVLKRLR. A helical membrane pass occupies residues 99–116; it reads ALSHNGPLFAISFLAFWV. Residues 117–124 are Cytoplasmic-facing; that stretch reads AWAHPGLQ. A helical transmembrane segment spans residues 125 to 149; it reads FLLCLCMYDSFLTMVDLHHNALLAD. The Extracellular segment spans residues 150-153; sequence LAVS. Residues 154-177 traverse the membrane as a helical segment; the sequence is AKDRTSLNFYCSFFSAIGSLSVFM. The Cytoplasmic segment spans residues 178 to 189; that stretch reads SYAVWNKEDFFS. A helical transmembrane segment spans residues 190–221; sequence FRIFCIVLAFCSIVGFTLSTQLLRQRFETDGK. The Extracellular segment spans residues 222-259; the sequence is AKWDQESTLKELYIEKLSVPQEKRITLVEYLQQLSRHR. Residues 260 to 287 form a helical membrane-spanning segment; the sequence is NFLWFVCMNLIQVFHCHFNSNFFPLFLE. Over 288–300 the chain is Cytoplasmic; the sequence is HLLSDKISVSTGS. Residues 301-320 traverse the membrane as a helical segment; that stretch reads FLLGISYIAPHLNNLYFLSL. Topologically, residues 321–325 are extracellular; it reads CRRWG. The helical transmembrane segment at 326 to 345 threads the bilayer; the sequence is VYAVVRGLFFLKLALSVVML. The Cytoplasmic segment spans residues 346-353; the sequence is LAGPDQVY. Residues 354–388 traverse the membrane as a helical segment; it reads LLCIFIASNRVFTEGTCKLLNLVVTDLVDEDLVLN. Residues 389–397 are Extracellular-facing; that stretch reads RRKQAASAL. The chain crosses the membrane as a helical span at residues 398–424; the sequence is LFGMVALVTKPGQTFAPLIGTWLLCVY. The Cytoplasmic portion of the chain corresponds to 425–458; sequence TGYDIFQRNPLSNVVSAQPKLESDTILEPTLRQG. Residues 459 to 477 traverse the membrane as a helical segment; that stretch reads CFYLLVFVPITCALLQLLS. Residues 478-509 are Extracellular-facing; sequence WTQFSLHGKRLQMVKAQRQGLMQGRAPEIKMI.

It is found in the cell membrane. This Gallus gallus (Chicken) protein is Transmembrane protein 180.